Here is a 173-residue protein sequence, read N- to C-terminus: uncharacterized protein (173 aa).

Residues 1–23 form a disordered region; it reads ELTSVAGSGRVDSTPLGSRGVTD.

In terms of tissue distribution, component of the acid-insoluble and acid-soluble organic matrix of calcified layers of the shell (at protein level).

The protein resides in the secreted. This is an uncharacterized protein from Lottia gigantea (Giant owl limpet).